The sequence spans 253 residues: Phosphoadenosine 5'-phosphosulfate reductase (253 aa).

Cys239 functions as the Nucleophile; cysteine thiosulfonate intermediate in the catalytic mechanism.

Belongs to the PAPS reductase family. CysH subfamily.

The protein resides in the cytoplasm. It catalyses the reaction [thioredoxin]-disulfide + sulfite + adenosine 3',5'-bisphosphate + 2 H(+) = [thioredoxin]-dithiol + 3'-phosphoadenylyl sulfate. Its pathway is sulfur metabolism; hydrogen sulfide biosynthesis; sulfite from sulfate: step 3/3. Catalyzes the formation of sulfite from phosphoadenosine 5'-phosphosulfate (PAPS) using thioredoxin as an electron donor. The polypeptide is Phosphoadenosine 5'-phosphosulfate reductase (Aliivibrio fischeri (strain ATCC 700601 / ES114) (Vibrio fischeri)).